The sequence spans 243 residues: tRNA (guanine-N(1)-)-methyltransferase (243 aa).

Residues glycine 111 and 131–136 (IGDYVL) each bind S-adenosyl-L-methionine.

The protein belongs to the RNA methyltransferase TrmD family. As to quaternary structure, homodimer.

Its subcellular location is the cytoplasm. The catalysed reaction is guanosine(37) in tRNA + S-adenosyl-L-methionine = N(1)-methylguanosine(37) in tRNA + S-adenosyl-L-homocysteine + H(+). Functionally, specifically methylates guanosine-37 in various tRNAs. This chain is tRNA (guanine-N(1)-)-methyltransferase, found in Brevibacillus brevis (strain 47 / JCM 6285 / NBRC 100599).